The following is a 185-amino-acid chain: Thymidine kinase (185 aa).

ATP-binding positions include 7-14 (GPMFAGKT) and 83-86 (DEIQ). Residue Glu-84 is the Proton acceptor of the active site. Residues Cys-139, Cys-142, Cys-177, and His-180 each coordinate Zn(2+).

Belongs to the thymidine kinase family. Homotetramer.

The protein localises to the cytoplasm. The catalysed reaction is thymidine + ATP = dTMP + ADP + H(+). This Pyrobaculum aerophilum (strain ATCC 51768 / DSM 7523 / JCM 9630 / CIP 104966 / NBRC 100827 / IM2) protein is Thymidine kinase.